The primary structure comprises 287 residues: tRNA uridine(34) hydroxylase (287 aa).

A Rhodanese domain is found at 132-226; it reads EGRPVVMLDT…YFEEVGGAHY (95 aa). The active-site Cysteine persulfide intermediate is the Cys-186.

This sequence belongs to the TrhO family.

The enzyme catalyses uridine(34) in tRNA + AH2 + O2 = 5-hydroxyuridine(34) in tRNA + A + H2O. In terms of biological role, catalyzes oxygen-dependent 5-hydroxyuridine (ho5U) modification at position 34 in tRNAs. The polypeptide is tRNA uridine(34) hydroxylase (Paraburkholderia xenovorans (strain LB400)).